The sequence spans 576 residues: uncharacterized protein (576 aa).

The tract at residues 41–78 is disordered; the sequence is EKESESKLNSKSTTLQSSDSEDWDSEENEDDITDVGVP. Positions 49-58 are enriched in low complexity; that stretch reads NSKSTTLQSS. Residues 59 to 73 are compositionally biased toward acidic residues; it reads DSEDWDSEENEDDIT. WD repeat units follow at residues 87–126, 195–235, 248–288, 296–335, and 393–433; these read GHSK…ATNP, GHIA…SQLE, LSRI…KRPV, LPQQ…KCVN, and TVTA…RGVK. The segment at 547–576 is disordered; sequence SETQPTPIYQGVTEGDISSEEGNPSKKQKR.

This is an uncharacterized protein from Schizosaccharomyces pombe (strain 972 / ATCC 24843) (Fission yeast).